A 435-amino-acid chain; its full sequence is Enolase (435 aa).

Glutamine 163 contacts (2R)-2-phosphoglycerate. The active-site Proton donor is the glutamate 205. 3 residues coordinate Mg(2+): aspartate 243, glutamate 292, and aspartate 319. Residues lysine 344, arginine 373, serine 374, and lysine 395 each contribute to the (2R)-2-phosphoglycerate site. Catalysis depends on lysine 344, which acts as the Proton acceptor.

The protein belongs to the enolase family. Mg(2+) is required as a cofactor.

Its subcellular location is the cytoplasm. It localises to the secreted. The protein resides in the cell surface. It carries out the reaction (2R)-2-phosphoglycerate = phosphoenolpyruvate + H2O. The protein operates within carbohydrate degradation; glycolysis; pyruvate from D-glyceraldehyde 3-phosphate: step 4/5. Its function is as follows. Catalyzes the reversible conversion of 2-phosphoglycerate (2-PG) into phosphoenolpyruvate (PEP). It is essential for the degradation of carbohydrates via glycolysis. This is Enolase from Streptococcus pyogenes serotype M12 (strain MGAS2096).